The sequence spans 110 residues: METIAKHRHARSSAQKVRLVADLIRGKKVSQALDILTYTNKKAAVLVKKVLESAIANAEHNDGADIDDLKVTKIFVDEGPSMKRIMPRAKGRADRILKRTSHITVVVSDR.

Belongs to the universal ribosomal protein uL22 family. As to quaternary structure, part of the 50S ribosomal subunit.

In terms of biological role, this protein binds specifically to 23S rRNA; its binding is stimulated by other ribosomal proteins, e.g. L4, L17, and L20. It is important during the early stages of 50S assembly. It makes multiple contacts with different domains of the 23S rRNA in the assembled 50S subunit and ribosome. Functionally, the globular domain of the protein is located near the polypeptide exit tunnel on the outside of the subunit, while an extended beta-hairpin is found that lines the wall of the exit tunnel in the center of the 70S ribosome. The sequence is that of Large ribosomal subunit protein uL22 from Citrobacter koseri (strain ATCC BAA-895 / CDC 4225-83 / SGSC4696).